The chain runs to 299 residues: Acetaldehyde dehydrogenase (299 aa).

11 to 14 is a binding site for NAD(+); it reads SGNI. Cys126 serves as the catalytic Acyl-thioester intermediate. Residues 157–165 and Asn267 each bind NAD(+); that span reads SAGPGTRAN.

It belongs to the acetaldehyde dehydrogenase family.

The enzyme catalyses acetaldehyde + NAD(+) + CoA = acetyl-CoA + NADH + H(+). The protein is Acetaldehyde dehydrogenase of Bacillus thuringiensis (strain Al Hakam).